A 212-amino-acid polypeptide reads, in one-letter code: Regulatory protein RecX (212 aa).

This sequence belongs to the RecX family.

Its subcellular location is the cytoplasm. Its function is as follows. Modulates RecA activity. In Clostridioides difficile (strain 630) (Peptoclostridium difficile), this protein is Regulatory protein RecX.